We begin with the raw amino-acid sequence, 490 residues long: GTPase Der (490 aa).

2 consecutive EngA-type G domains span residues 3-167 and 203-378; these read FTLA…DAFE and LQVA…EVWN. GTP is bound by residues 9-16, 56-60, 119-122, 209-216, 256-260, and 321-324; these read GRPNVGKS, DTAGL, NKAE, GRPNAGKS, DTAGM, and NKWD. A KH-like domain is found at 379–465; that stretch reads RRVPTAALNR…RLTMRSQSDA (87 aa). The interval 451–490 is disordered; the sequence is PGTPIRLTMRSQSDANPYKNRKKSTPSRLRKHLGKPSLKG. Residues 469–484 are compositionally biased toward basic residues; it reads KNRKKSTPSRLRKHLG.

It belongs to the TRAFAC class TrmE-Era-EngA-EngB-Septin-like GTPase superfamily. EngA (Der) GTPase family. Associates with the 50S ribosomal subunit.

Its function is as follows. GTPase that plays an essential role in the late steps of ribosome biogenesis. This is GTPase Der from Dinoroseobacter shibae (strain DSM 16493 / NCIMB 14021 / DFL 12).